A 928-amino-acid chain; its full sequence is Echinoderm microtubule-associated protein-like 4 (928 aa).

The segment at 1-189 is microtubule-binding; that stretch reads MDGFAGSLDD…IPSDVENYDD (189 aa). Positions 14-63 form a coiled coil; the sequence is AASTSDVQDRLSALELRVQQQEDEITVLKAALADVLRRLAISEDQVATVR. Residues 107–131 form a disordered region; sequence SAAKSVKRSSTIEKSHNSWDASEES. Positions 116 to 131 are enriched in basic and acidic residues; it reads STIEKSHNSWDASEES. WD repeat units lie at residues 199 to 237, 241 to 288, 296 to 336, 343 to 378, 385 to 424, 442 to 480, 485 to 521, 524 to 563, 567 to 604, 610 to 646, 653 to 692, 702 to 760, and 767 to 806; these read LKLE…LFNY, TQRH…VWDS, VIGL…VWDW, AEIK…FWTW, RKQG…IWSK, QISR…MWDH, EREI…LRGT, DGFQ…LWNS, SLEW…VLDA, VSIH…LYNV, YSRY…YWDI, RSDC…LFQY, and APSH…QWRL. The disordered stretch occupies residues 821–928; it reads SSSAVNSPVV…ENQDDSSPLS (108 aa). A compositionally biased stretch (polar residues) spans 836-845; it reads QPNTPTNLPQ. The segment covering 867-876 has biased composition (acidic residues); the sequence is DALEQPEELN. Residues 877-898 are compositionally biased toward polar residues; it reads EVQSEKCSSQPEGANGQEPSNE.

This sequence belongs to the WD repeat EMAP family. In terms of assembly, homotrimer; self-association is mediated by the N-terminal coiled coil.

The protein localises to the cytoplasm. The protein resides in the cytoskeleton. It localises to the spindle. Its subcellular location is the microtubule organizing center. It is found in the midbody. Its function is as follows. Essential for the formation and stability of microtubules (MTs). Required for the organization of the mitotic spindle and for the proper attachment of kinetochores to MTs. Promotes the recruitment of NUDC to the mitotic spindle for mitotic progression. The chain is Echinoderm microtubule-associated protein-like 4 (eml4) from Xenopus tropicalis (Western clawed frog).